We begin with the raw amino-acid sequence, 875 residues long: Alanine--tRNA ligase (875 aa).

Positions 564, 568, 666, and 670 each coordinate Zn(2+).

The protein belongs to the class-II aminoacyl-tRNA synthetase family. As to quaternary structure, homotetramer. It depends on Zn(2+) as a cofactor.

The protein resides in the cytoplasm. The catalysed reaction is tRNA(Ala) + L-alanine + ATP = L-alanyl-tRNA(Ala) + AMP + diphosphate. Functionally, catalyzes the attachment of alanine to tRNA(Ala) in a two-step reaction: alanine is first activated by ATP to form Ala-AMP and then transferred to the acceptor end of tRNA(Ala). Also edits incorrectly charged Ser-tRNA(Ala) and Gly-tRNA(Ala) via its editing domain. In Serratia proteamaculans (strain 568), this protein is Alanine--tRNA ligase.